The sequence spans 215 residues: Cytochrome b6 (215 aa).

Residues 32 to 52 (IFYCLGGITLTCFLVQVATGF) traverse the membrane as a helical segment. Cys35 contributes to the heme c binding site. Positions 86 and 100 each coordinate heme b. The next 3 membrane-spanning stretches (helical) occupy residues 90 to 110 (ASMM…TGGF), 116 to 136 (LTWV…VTGY), and 186 to 206 (LHTF…FPMI). Heme b is bound by residues His187 and His202.

This sequence belongs to the cytochrome b family. PetB subfamily. As to quaternary structure, the 4 large subunits of the cytochrome b6-f complex are cytochrome b6, subunit IV (17 kDa polypeptide, PetD), cytochrome f and the Rieske protein, while the 4 small subunits are PetG, PetL, PetM and PetN. The complex functions as a dimer. Heme b is required as a cofactor. It depends on heme c as a cofactor.

The protein resides in the plastid. It is found in the chloroplast thylakoid membrane. Component of the cytochrome b6-f complex, which mediates electron transfer between photosystem II (PSII) and photosystem I (PSI), cyclic electron flow around PSI, and state transitions. The sequence is that of Cytochrome b6 from Lactuca sativa (Garden lettuce).